Here is a 199-residue protein sequence, read N- to C-terminus: DnaJ homolog subfamily C member 5B (199 aa).

2 positions are modified to phosphoserine: serine 14 and serine 16. In terms of domain architecture, J spans 19–84 (ALYEILGLQK…SKRNIYDKYG (66 aa)).

Interacts with the chaperone complex consisting of HSC70 and SGTA. In terms of processing, palmitoylated.

It is found in the membrane. This Ailuropoda melanoleuca (Giant panda) protein is DnaJ homolog subfamily C member 5B (DNAJC5B).